Reading from the N-terminus, the 199-residue chain is DNA repair RAD52-like protein 2, chloroplastic (199 aa).

Residues 1–40 (MALQVQQTSAAFTISSPSTAAARIKLSPFRTVAVNRGVRC) constitute a chloroplast transit peptide. Residue Ser-41 is modified to N-acetylserine.

The protein belongs to the RAD52 family. As to expression, expressed in roots and shoots. Expressed at low levels in cauline leaves, flower buds, flowers and siliques.

The protein localises to the plastid. Its subcellular location is the chloroplast. Functionally, involved in double-stranded DNA break repair. The protein is DNA repair RAD52-like protein 2, chloroplastic of Arabidopsis thaliana (Mouse-ear cress).